Here is a 68-residue protein sequence, read N- to C-terminus: Large ribosomal subunit protein bL31 (68 aa).

Zn(2+) contacts are provided by Cys-17, Cys-19, Cys-37, and Cys-40.

Belongs to the bacterial ribosomal protein bL31 family. Type A subfamily. In terms of assembly, part of the 50S ribosomal subunit. Requires Zn(2+) as cofactor.

Binds the 23S rRNA. This is Large ribosomal subunit protein bL31 from Dehalococcoides mccartyi (strain ATCC BAA-2266 / KCTC 15142 / 195) (Dehalococcoides ethenogenes (strain 195)).